Consider the following 407-residue polypeptide: Arrestin domain-containing protein 2 (407 aa).

The protein belongs to the arrestin family. Interacts with WWP1 (via WW domains).

The polypeptide is Arrestin domain-containing protein 2 (ARRDC2) (Homo sapiens (Human)).